Reading from the N-terminus, the 206-residue chain is MANDVTKDPTPKSDIVEDIYLWRRKKLAFSTLLVSTSTWILLSFYGFTTITIVSWIGIAVVSMIFLWGSLLRLLSKVEPELSGLEVSEEFVVETVRSCRMLMEEMVRWMFRVGAESEWFVFARTVLGFWILSRIGNLLDFHTCLFIGLVMGLTVPKLWEEYGDQIQKHLGSLKDKSKGAYNTTHEKILEMKNKLHHGTEEKVKKSE.

One can recognise a Reticulon domain in the interval 16–206 (VEDIYLWRRK…GTEEKVKKSE (191 aa)). 3 consecutive transmembrane segments (helical) span residues 27–47 (LAFS…FYGF), 50–70 (ITIV…WGSL), and 134–154 (IGNL…GLTV).

Its subcellular location is the endoplasmic reticulum membrane. In Arabidopsis thaliana (Mouse-ear cress), this protein is Reticulon-like protein B13 (RTNLB13).